Reading from the N-terminus, the 271-residue chain is MFNVKGALNRLRTTWSNSEESDRDPRHLKSSDDLSNYTGSRMSYEETLPPVTLLGYSPKTKNRLLHPEMCDELRPLMPTRIQLYTEWTLLYSLEQHGASLHSLYDKLREDASTPRRVGYVLVIKDRKDGIFGAYSNEPFHPHEHMRYSGNGECFLWKMESVPNKILRAKIREDKDEDLIDVNDDEDKINNSGTVNESWKLCAYPYTGANDFMIYCTSKFLSLGAGEGHYGLWCDDGLMKGVTNPTQTYGNDVLSREGRKFTIMGLEVWRVG.

The disordered stretch occupies residues 15–41 (WSNSEESDRDPRHLKSSDDLSNYTGSR). Residues 23-32 (RDPRHLKSSD) are compositionally biased toward basic and acidic residues. One can recognise a TLDc domain in the interval 63–271 (RLLHPEMCDE…IMGLEVWRVG (209 aa)).

Belongs to the OXR1 family.

Its subcellular location is the mitochondrion. May be involved in protection from oxidative damage. The sequence is that of Oxidation resistance protein 1 (OXR1) from Candida glabrata (strain ATCC 2001 / BCRC 20586 / JCM 3761 / NBRC 0622 / NRRL Y-65 / CBS 138) (Yeast).